A 217-amino-acid polypeptide reads, in one-letter code: UPF0111 protein MTH_1689 (217 aa).

The protein belongs to the UPF0111 family.

In Methanothermobacter thermautotrophicus (strain ATCC 29096 / DSM 1053 / JCM 10044 / NBRC 100330 / Delta H) (Methanobacterium thermoautotrophicum), this protein is UPF0111 protein MTH_1689.